Reading from the N-terminus, the 707-residue chain is NADP(+)-dependent formate dehydrogenase subunit beta (707 aa).

Heterotetramer composed of two alpha (FdhA) and two beta (FdhB) subunits.

It localises to the cytoplasm. The catalysed reaction is formate + NADP(+) = CO2 + NADPH. Activity is very sensitive to oxygen. The activity in growing cells is enhanced when selenite and molybdate are added together to the growth medium. Tungstate replaces and is better than molybdate. Selenite is incorporated into the enzyme. Requires a sulfhydryl compound for activity. Inhibited by cyanide, EDTA, hypophosphite and mercaptoethanol. Sulfite inhibits the activity with NADP but not with methyl viologen as electron acceptor. Its function is as follows. Component of a dehydrogenase that catalyzes the NADP-dependent reduction of CO(2) to formate, the first step in the synthesis of the methyl group of acetate during synthesis of acetate from CO(2). In vitro, can use methyl viologen and benzyl viologen in addition to its natural electron acceptor. The protein is NADP(+)-dependent formate dehydrogenase subunit beta of Moorella thermoacetica (Clostridium thermoaceticum).